Consider the following 649-residue polypeptide: Acetyl-coenzyme A synthetase (649 aa).

CoA-binding positions include 191 to 194 (RGGR), threonine 312, and asparagine 336. ATP contacts are provided by residues 388-390 (GEP), 412-417 (DTWWQT), aspartate 501, and arginine 516. Residue serine 524 coordinates CoA. Position 527 (arginine 527) interacts with ATP. The Mg(2+) site is built by valine 538, histidine 540, and valine 543. A CoA-binding site is contributed by arginine 585. Lysine 610 bears the N6-acetyllysine mark.

The protein belongs to the ATP-dependent AMP-binding enzyme family. Requires Mg(2+) as cofactor. Post-translationally, acetylated. Deacetylation by the SIR2-homolog deacetylase activates the enzyme.

The catalysed reaction is acetate + ATP + CoA = acetyl-CoA + AMP + diphosphate. Catalyzes the conversion of acetate into acetyl-CoA (AcCoA), an essential intermediate at the junction of anabolic and catabolic pathways. AcsA undergoes a two-step reaction. In the first half reaction, AcsA combines acetate with ATP to form acetyl-adenylate (AcAMP) intermediate. In the second half reaction, it can then transfer the acetyl group from AcAMP to the sulfhydryl group of CoA, forming the product AcCoA. In Marinobacter nauticus (strain ATCC 700491 / DSM 11845 / VT8) (Marinobacter aquaeolei), this protein is Acetyl-coenzyme A synthetase.